A 148-amino-acid chain; its full sequence is Calcium-permeable cation-selective channel WeiTsing (148 aa).

At 1 to 25 the chain is on the cytoplasmic side; the sequence is METVSAVNQTLPISGGEPVKFTTYS. A helical membrane pass occupies residues 26 to 46; it reads AAVHKVLVMINAGILGLLQLV. At 47–51 the chain is on the lumenal side; sequence SQQSS. Residues 52–72 traverse the membrane as a helical segment; it reads VLETHKAAFLCFCVFILFYAV. Over 73-90 the chain is Cytoplasmic; sequence LRVREAMDVRLQPGLVPR. The helical transmembrane segment at 91 to 110 threads the bilayer; sequence LIGHGSHLFGGLAALVLVSV. Residues 111-116 are Lumenal-facing; that stretch reads VSTAFS. Residues 117–133 traverse the membrane as a helical segment; sequence IVLFLLWFIWLSAVVYL. Over 134 to 148 the chain is Cytoplasmic; the sequence is ETNKPSACPPQLPPV.

Forms pentamers with a central pore to produce an ion channel.

It is found in the endoplasmic reticulum membrane. The catalysed reaction is Ca(2+)(in) = Ca(2+)(out). It carries out the reaction Na(+)(in) = Na(+)(out). In terms of biological role, calcium-permeable cation-selective channel conferring a broad-spectrum clubroot resistance by supporting cytosolic Ca(2+) increase in root pericycle cells. Triggers immunity toward fungal pathogens such as Plasmodiophora brassicae (Pb) and induces defenses. Also permeable to sodium ion Na(+) and possibly other cations. The polypeptide is Calcium-permeable cation-selective channel WeiTsing (Arabidopsis thaliana (Mouse-ear cress)).